The chain runs to 548 residues: Chaperonin GroEL (548 aa).

ATP is bound by residues Thr-29–Pro-32, Lys-50, Asp-86–Thr-90, Gly-414, Asn-478–Ala-480, and Asp-494.

This sequence belongs to the chaperonin (HSP60) family. As to quaternary structure, forms a cylinder of 14 subunits composed of two heptameric rings stacked back-to-back. Interacts with the co-chaperonin GroES.

Its subcellular location is the cytoplasm. It carries out the reaction ATP + H2O + a folded polypeptide = ADP + phosphate + an unfolded polypeptide.. Together with its co-chaperonin GroES, plays an essential role in assisting protein folding. The GroEL-GroES system forms a nano-cage that allows encapsulation of the non-native substrate proteins and provides a physical environment optimized to promote and accelerate protein folding. The chain is Chaperonin GroEL from Alcanivorax borkumensis (strain ATCC 700651 / DSM 11573 / NCIMB 13689 / SK2).